The following is a 222-amino-acid chain: Deoxyribose-phosphate aldolase (222 aa).

The active-site Proton donor/acceptor is D91. The active-site Schiff-base intermediate with acetaldehyde is the K153. K182 functions as the Proton donor/acceptor in the catalytic mechanism.

This sequence belongs to the DeoC/FbaB aldolase family. DeoC type 1 subfamily.

It localises to the cytoplasm. The enzyme catalyses 2-deoxy-D-ribose 5-phosphate = D-glyceraldehyde 3-phosphate + acetaldehyde. It participates in carbohydrate degradation; 2-deoxy-D-ribose 1-phosphate degradation; D-glyceraldehyde 3-phosphate and acetaldehyde from 2-deoxy-alpha-D-ribose 1-phosphate: step 2/2. Catalyzes a reversible aldol reaction between acetaldehyde and D-glyceraldehyde 3-phosphate to generate 2-deoxy-D-ribose 5-phosphate. The protein is Deoxyribose-phosphate aldolase of Mycoplasma capricolum subsp. capricolum (strain California kid / ATCC 27343 / NCTC 10154).